The sequence spans 982 residues: Ubiquitin carboxyl-terminal hydrolase 37 (982 aa).

A KEN box 1 motif is present at residues 32–34 (KEN). Short sequence motifs (D-box) lie at residues 71–79 (RLMLTLQDN) and 96–105 (RLFLDAVHQN). S115 bears the Phosphoserine mark. The tract at residues 128–162 (RTSQKETHRQLSYSDNQVSSKRGSLETKDDIPFRK) is disordered. Residues 137–149 (QLSYSDNQVSSKR) show a composition bias toward polar residues. The span at 150–160 (GSLETKDDIPF) shows a compositional bias: basic and acidic residues. Residues 161–169 (RKVLGNPGR) carry the D-box 3 motif. A Phosphoserine modification is found at S171. Residues 183–201 (TRTIPSLTSTSTPLRSGLL) show a composition bias toward low complexity. The segment at 183–307 (TRTIPSLTST…TPSAKRSLGF (125 aa)) is disordered. The residue at position 213 (S213) is a Phosphoserine. The KEN box 2 signature appears at 224 to 226 (KEN). A compositionally biased stretch (basic and acidic residues) spans 246–260 (SREKQLSLKQSEENR). Over residues 282-301 (YSPSSTNLDRTNISSQTPSA) the composition is skewed to polar residues. The USP domain occupies 343-954 (QGFSNLGNTC…SGYIFFYMHK (612 aa)). C352 (nucleophile) is an active-site residue. The residue at position 631 (S631) is a Phosphoserine; by CDK2. Phosphoserine occurs at positions 653 and 655. Disordered regions lie at residues 672 to 705 (ISSS…GFDA) and 720 to 798 (KREA…GEVD). 2 stretches are compositionally biased toward basic and acidic residues: residues 684–698 (KDSK…KSEL) and 720–735 (KREA…DDKP). A UIM 1 domain is found at 707 to 726 (SEEELLAAVLEISKREASPS). A Phosphoserine modification is found at S773. Positions 777-789 (ITKDCDENKENKT) are enriched in basic and acidic residues. Residues 785–787 (KEN) carry the KEN box 3 motif. UIM domains lie at 809–828 (REEQ…QEAW) and 831–850 (KEDD…FNNS). H909 acts as the Proton acceptor in catalysis.

The protein belongs to the peptidase C19 family. Interacts with FZR1/CDH1. Interacts with CDT1. In terms of processing, polyubiquitinated via 'Lys-11'-linked ubiquitin by the APC(CDH1) complex during late mitosis, leading to its degradation. Able to mediate auto-deubiquitination. Post-translationally, phosphorylated at Ser-631 by CDK2 during G1/S phase but not during mitosis; phosphorylation at Ser-631 is required for deubiquitinase activity. Also polyubiquitinated during early G1 phase, without leading to degradation. Phosphorylated at Ser-115 by ATM following DNA damage, which in turn increases its deubiquitination activity towards BLM.

It is found in the nucleus. Its subcellular location is the chromosome. It carries out the reaction Thiol-dependent hydrolysis of ester, thioester, amide, peptide and isopeptide bonds formed by the C-terminal Gly of ubiquitin (a 76-residue protein attached to proteins as an intracellular targeting signal).. Deubiquitinase that plays a role in different processes including cell cycle regulation, DNA replication or DNA damage response. Antagonizes the anaphase-promoting complex (APC/C) during G1/S transition by mediating deubiquitination of cyclin-A (CCNA1 and CCNA2), thereby promoting S phase entry. Specifically mediates deubiquitination of 'Lys-11'-linked polyubiquitin chains, a specific ubiquitin-linkage type mediated by the APC/C complex. Phosphorylation at Ser-628 during G1/S phase maximizes the deubiquitinase activity, leading to prevent degradation of cyclin-A (CCNA1 and CCNA2). Plays an important role in the regulation of DNA replication by stabilizing the licensing factor CDT1. Also plays an essential role beyond S-phase entry to promote the efficiency and fidelity of replication by deubiquitinating checkpoint kinase 1/CHK1, promoting its stability. Sustains the DNA damage response (DDR) by deubiquitinating and stabilizing the ATP-dependent DNA helicase BLM. Mechanistically, DNA double-strand breaks (DSB) promotes ATM-mediated phosphorylation of USP37 and enhances the binding between USP37 and BLM. Promotes cell migration by deubiquitinating and stabilizing the epithelial-mesenchymal transition (EMT)-inducing transcription factor SNAI. Plays a role in the regulation of mitotic spindle assembly and mitotic progression by associating with chromatin-associated WAPL and stabilizing it through deubiquitination. This chain is Ubiquitin carboxyl-terminal hydrolase 37 (USP37), found in Sus scrofa (Pig).